Consider the following 170-residue polypeptide: UPF0260 protein Rpal_2074 (170 aa).

Belongs to the UPF0260 family.

The polypeptide is UPF0260 protein Rpal_2074 (Rhodopseudomonas palustris (strain TIE-1)).